The primary structure comprises 215 residues: MNSLFVLIKRELIVQNRINNIIKYLVIFFLFCIISTVLINSERDINKFGLIFSVICLLISLIGFSSVIFKSDLEDGSLELLLSIVSHEKIILAKFFAIFISSTIGLVFVLPIIYVLFDKTLLEIIFFFSSVWMILVLSSSLVVLSGSVQCYFKKNANFVGTFIMPLLIPNIIMTGLILQDNNLQLIFIMIGINLVFLPISFFLSSCLIKNIYNIT.

Helical transmembrane passes span 21–40, 50–69, 95–117, 122–144, 156–178, and 183–205; these read IIKY…VLIN, LIFS…SVIF, FFAI…YVLF, LEII…LVVL, ANFV…GLIL, and LQLI…FLSS.

The protein belongs to the CcmB/CycW/HelB family.

Its subcellular location is the cell membrane. This is an uncharacterized protein from Rickettsia conorii (strain ATCC VR-613 / Malish 7).